The chain runs to 259 residues: Protein-L-isoaspartate O-methyltransferase (259 aa).

Positions 1–25 (MRKRVDPPAGGRLAPGITPANSNTR) are disordered. Residue serine 107 is part of the active site.

The protein belongs to the methyltransferase superfamily. L-isoaspartyl/D-aspartyl protein methyltransferase family.

It is found in the cytoplasm. The catalysed reaction is [protein]-L-isoaspartate + S-adenosyl-L-methionine = [protein]-L-isoaspartate alpha-methyl ester + S-adenosyl-L-homocysteine. In terms of biological role, catalyzes the methyl esterification of L-isoaspartyl residues in peptides and proteins that result from spontaneous decomposition of normal L-aspartyl and L-asparaginyl residues. It plays a role in the repair and/or degradation of damaged proteins. This chain is Protein-L-isoaspartate O-methyltransferase, found in Bordetella bronchiseptica (strain ATCC BAA-588 / NCTC 13252 / RB50) (Alcaligenes bronchisepticus).